A 520-amino-acid polypeptide reads, in one-letter code: Type I restriction enzyme EcoprrI methylase subunit (520 aa).

S-adenosyl-L-methionine-binding positions include 198-203, 230-232, and E254; these read EFFTPQ and SGS.

The protein belongs to the N(4)/N(6)-methyltransferase family. In terms of assembly, the type I restriction/modification system is composed of three polypeptides R, M and S; the restriction enzyme has stoichiometry R(2)M(2)S(1) while the methyltransferase is M(2)S(1).

The catalysed reaction is a 2'-deoxyadenosine in DNA + S-adenosyl-L-methionine = an N(6)-methyl-2'-deoxyadenosine in DNA + S-adenosyl-L-homocysteine + H(+). Its function is as follows. The subtype gamma methyltransferase (M) subunit of a type I restriction enzyme. The M and S subunits together form a methyltransferase (MTase) that methylates two adenine residues of the sequence 5'-CCAN(7)ATGC-3'. In the presence of the R subunit the complex can also act as an endonuclease, binding to the same target sequence but cutting the DNA some distance from this site. Whether the DNA is cut or modified depends on the methylation state of the target sequence. When the target site is unmodified, the DNA is cut. When the target site is hemimethylated, the complex acts as a maintenance MTase modifying the DNA so that both strands become methylated. After locating a non-methylated recognition site, the enzyme complex serves as a molecular motor that translocates DNA in an ATP-dependent manner until a collision occurs that triggers cleavage. This chain is Type I restriction enzyme EcoprrI methylase subunit, found in Escherichia coli.